The following is a 181-amino-acid chain: Phospholipase A2 inhibitor gamma subunit B (181 aa).

8 disulfides stabilise this stretch: cysteine 3-cysteine 27, cysteine 6-cysteine 13, cysteine 20-cysteine 48, cysteine 54-cysteine 75, cysteine 76-cysteine 81, cysteine 101-cysteine 126, cysteine 119-cysteine 146, and cysteine 152-cysteine 172.

This sequence belongs to the CNF-like-inhibitor family. Heterotrimer of 2 subunits A and 1 subunit B. Expressed by the liver.

The protein localises to the secreted. Functionally, strongly inhibits its own venom PLA2 and all other PLA2s tested including Elapid, Crotalid and Viperid venom PLA2s, as well as honeybee PLA2s. In Laticauda semifasciata (Black-banded sea krait), this protein is Phospholipase A2 inhibitor gamma subunit B.